The sequence spans 67 residues: Medusin-H1 (67 aa).

The first 22 residues, 1 to 22, serve as a signal peptide directing secretion; sequence MDFLKKSLFLVLFLGFFSLSIC. The propeptide occupies 23–48; sequence EEEKRETEEKENEQEDDREERREEKR. The interval 24 to 46 is disordered; the sequence is EEKRETEEKENEQEDDREERREE. Positions 31–40 are enriched in acidic residues; the sequence is EKENEQEDDR. Leu-66 is modified (leucine amide).

This sequence belongs to the frog skin active peptide (FSAP) family. Medusin subfamily. Expressed by the skin glands.

The protein resides in the secreted. Functionally, antimicrobial peptide with activity against Gram-positive bacteria (S.aureus, MIC=32 mg/L) and fungi (C.albicans, MIC=128 mg/L). Shows weak hemolytic activity. The polypeptide is Medusin-H1 (Pithecopus hypochondrialis (Orange-legged leaf frog)).